Consider the following 305-residue polypeptide: Imidazoleglycerol-phosphate dehydratase (305 aa).

The protein belongs to the imidazoleglycerol-phosphate dehydratase family.

It localises to the cytoplasm. The catalysed reaction is D-erythro-1-(imidazol-4-yl)glycerol 3-phosphate = 3-(imidazol-4-yl)-2-oxopropyl phosphate + H2O. The protein operates within amino-acid biosynthesis; L-histidine biosynthesis; L-histidine from 5-phospho-alpha-D-ribose 1-diphosphate: step 6/9. The chain is Imidazoleglycerol-phosphate dehydratase from Neisseria meningitidis serogroup C (strain 053442).